Reading from the N-terminus, the 481-residue chain is Ribosomal RNA small subunit methyltransferase F (481 aa).

Residues 119 to 125 (ASAPGSK), E143, D170, and D188 contribute to the S-adenosyl-L-methionine site. C241 serves as the catalytic Nucleophile.

The protein belongs to the class I-like SAM-binding methyltransferase superfamily. RsmB/NOP family.

It localises to the cytoplasm. The enzyme catalyses cytidine(1407) in 16S rRNA + S-adenosyl-L-methionine = 5-methylcytidine(1407) in 16S rRNA + S-adenosyl-L-homocysteine + H(+). Specifically methylates the cytosine at position 1407 (m5C1407) of 16S rRNA. In Shewanella sp. (strain MR-4), this protein is Ribosomal RNA small subunit methyltransferase F.